Here is an 870-residue protein sequence, read N- to C-terminus: Aminopeptidase N (870 aa).

Substrate contacts are provided by residues Glu-121 and Gly-261 to Asn-265. His-297 provides a ligand contact to Zn(2+). Catalysis depends on Glu-298, which acts as the Proton acceptor. His-301 and Glu-320 together coordinate Zn(2+).

Belongs to the peptidase M1 family. Zn(2+) is required as a cofactor.

The protein localises to the cell inner membrane. The enzyme catalyses Release of an N-terminal amino acid, Xaa-|-Yaa- from a peptide, amide or arylamide. Xaa is preferably Ala, but may be most amino acids including Pro (slow action). When a terminal hydrophobic residue is followed by a prolyl residue, the two may be released as an intact Xaa-Pro dipeptide.. Its function is as follows. Aminopeptidase N is involved in the degradation of intracellular peptides generated by protein breakdown during normal growth as well as in response to nutrient starvation. In Escherichia coli (strain K12), this protein is Aminopeptidase N (pepN).